We begin with the raw amino-acid sequence, 398 residues long: uncharacterized protein (398 aa).

The signal sequence occupies residues 1–21 (MRKVGITLSVVALVIMGFVAG). The residue at position 22 (C22) is an N-acetylcysteine. The S-archaeol cysteine moiety is linked to residue C22.

This sequence belongs to the BMP lipoprotein family.

The protein resides in the cell membrane. This is an uncharacterized protein from Pyrococcus furiosus (strain ATCC 43587 / DSM 3638 / JCM 8422 / Vc1).